Here is a 460-residue protein sequence, read N- to C-terminus: tRNA modification GTPase MnmE (460 aa).

Residues arginine 29, glutamate 91, and lysine 132 each contribute to the (6S)-5-formyl-5,6,7,8-tetrahydrofolate site. A TrmE-type G domain is found at 227–383; that stretch reads GISIALIGKT…LIDTIIKKCG (157 aa). Asparagine 237 contributes to the K(+) binding site. Residues 237-242, 256-262, and 281-284 contribute to the GTP site; these read NVGKSS, TNIPGTT, and DTAG. Position 241 (serine 241) interacts with Mg(2+). Threonine 256, isoleucine 258, and threonine 261 together coordinate K(+). A Mg(2+)-binding site is contributed by threonine 262. A (6S)-5-formyl-5,6,7,8-tetrahydrofolate-binding site is contributed by lysine 460.

The protein belongs to the TRAFAC class TrmE-Era-EngA-EngB-Septin-like GTPase superfamily. TrmE GTPase family. Homodimer. Heterotetramer of two MnmE and two MnmG subunits. K(+) is required as a cofactor.

It localises to the cytoplasm. Functionally, exhibits a very high intrinsic GTPase hydrolysis rate. Involved in the addition of a carboxymethylaminomethyl (cmnm) group at the wobble position (U34) of certain tRNAs, forming tRNA-cmnm(5)s(2)U34. The protein is tRNA modification GTPase MnmE of Prochlorococcus marinus (strain AS9601).